The chain runs to 217 residues: 7-cyano-7-deazaguanine synthase (217 aa).

Position 10–20 (Phe-10–Leu-20) interacts with ATP. Residues Cys-185, Cys-194, Cys-197, and Cys-200 each coordinate Zn(2+).

Belongs to the QueC family. Homodimer. The cofactor is Zn(2+).

The enzyme catalyses 7-carboxy-7-deazaguanine + NH4(+) + ATP = 7-cyano-7-deazaguanine + ADP + phosphate + H2O + H(+). It participates in purine metabolism; 7-cyano-7-deazaguanine biosynthesis. Its function is as follows. Catalyzes the ATP-dependent conversion of 7-carboxy-7-deazaguanine (CDG) to 7-cyano-7-deazaguanine (preQ(0)). The sequence is that of 7-cyano-7-deazaguanine synthase from Streptococcus mutans serotype c (strain ATCC 700610 / UA159).